A 745-amino-acid polypeptide reads, in one-letter code: Phosphoribosylformylglycinamidine synthase subunit PurL (745 aa).

The active site involves H41. Residues Y44 and K83 each coordinate ATP. E85 contacts Mg(2+). Residues 86–89 (SHNH) and R108 contribute to the substrate site. H87 acts as the Proton acceptor in catalysis. D109 lines the Mg(2+) pocket. Q232 provides a ligand contact to substrate. A Mg(2+)-binding site is contributed by D260. 304-306 (ESQ) is a binding site for substrate. 2 residues coordinate ATP: D494 and G531. N532 is a Mg(2+) binding site. Position 534 (S534) interacts with substrate.

It belongs to the FGAMS family. In terms of assembly, monomer. Part of the FGAM synthase complex composed of 1 PurL, 1 PurQ and 2 PurS subunits.

Its subcellular location is the cytoplasm. The enzyme catalyses N(2)-formyl-N(1)-(5-phospho-beta-D-ribosyl)glycinamide + L-glutamine + ATP + H2O = 2-formamido-N(1)-(5-O-phospho-beta-D-ribosyl)acetamidine + L-glutamate + ADP + phosphate + H(+). It participates in purine metabolism; IMP biosynthesis via de novo pathway; 5-amino-1-(5-phospho-D-ribosyl)imidazole from N(2)-formyl-N(1)-(5-phospho-D-ribosyl)glycinamide: step 1/2. Part of the phosphoribosylformylglycinamidine synthase complex involved in the purines biosynthetic pathway. Catalyzes the ATP-dependent conversion of formylglycinamide ribonucleotide (FGAR) and glutamine to yield formylglycinamidine ribonucleotide (FGAM) and glutamate. The FGAM synthase complex is composed of three subunits. PurQ produces an ammonia molecule by converting glutamine to glutamate. PurL transfers the ammonia molecule to FGAR to form FGAM in an ATP-dependent manner. PurS interacts with PurQ and PurL and is thought to assist in the transfer of the ammonia molecule from PurQ to PurL. The sequence is that of Phosphoribosylformylglycinamidine synthase subunit PurL from Aquifex aeolicus (strain VF5).